The following is a 635-amino-acid chain: Cilia- and flagella-associated protein 206 (635 aa).

The protein belongs to the CFAP206 family.

It localises to the cytoplasm. The protein resides in the cytoskeleton. Its subcellular location is the cilium axoneme. May regulate cilium motility through its role in the assembly of the axonemal RS2 radial spoke. In Tetrahymena thermophila (strain SB210), this protein is Cilia- and flagella-associated protein 206.